The chain runs to 462 residues: ATP synthase subunit beta 2 (462 aa).

An ATP-binding site is contributed by Gly-151–Thr-158.

The protein belongs to the ATPase alpha/beta chains family. In terms of assembly, F-type ATPases have 2 components, CF(1) - the catalytic core - and CF(0) - the membrane proton channel. CF(1) has five subunits: alpha(3), beta(3), gamma(1), delta(1), epsilon(1). CF(0) has three main subunits: a(1), b(2) and c(9-12). The alpha and beta chains form an alternating ring which encloses part of the gamma chain. CF(1) is attached to CF(0) by a central stalk formed by the gamma and epsilon chains, while a peripheral stalk is formed by the delta and b chains.

It is found in the cell inner membrane. The catalysed reaction is ATP + H2O + 4 H(+)(in) = ADP + phosphate + 5 H(+)(out). Functionally, produces ATP from ADP in the presence of a proton gradient across the membrane. The catalytic sites are hosted primarily by the beta subunits. This Chlorobaculum tepidum (strain ATCC 49652 / DSM 12025 / NBRC 103806 / TLS) (Chlorobium tepidum) protein is ATP synthase subunit beta 2.